The chain runs to 347 residues: NADH-ubiquinone oxidoreductase chain 2 (347 aa).

A run of 10 helical transmembrane segments spans residues 1–21 (MNPS…MMVI), 25–45 (HWLL…PIMM), 59–79 (YLLT…INLM), 96–116 (TLMT…FWVP), 122–142 (IPLT…LSIL), 149–169 (INLY…GWGG), 200–220 (LTLL…MLFI), 239–259 (IITT…PLSG), 274–294 (DILI…YFYM), and 325–345 (LLPT…MLSI).

The protein belongs to the complex I subunit 2 family. Core subunit of respiratory chain NADH dehydrogenase (Complex I) which is composed of 45 different subunits. Interacts with TMEM242.

It is found in the mitochondrion inner membrane. The catalysed reaction is a ubiquinone + NADH + 5 H(+)(in) = a ubiquinol + NAD(+) + 4 H(+)(out). Core subunit of the mitochondrial membrane respiratory chain NADH dehydrogenase (Complex I) which catalyzes electron transfer from NADH through the respiratory chain, using ubiquinone as an electron acceptor. Essential for the catalytic activity and assembly of complex I. In Balaenoptera musculus (Blue whale), this protein is NADH-ubiquinone oxidoreductase chain 2.